The primary structure comprises 264 residues: Phosphonoacetaldehyde hydrolase (264 aa).

Asp9 (nucleophile) is an active-site residue. Asp9 and Ala11 together coordinate Mg(2+). The active-site Schiff-base intermediate with substrate is Lys50. Asp183 is a Mg(2+) binding site.

The protein belongs to the HAD-like hydrolase superfamily. PhnX family. In terms of assembly, homodimer. Requires Mg(2+) as cofactor.

It carries out the reaction phosphonoacetaldehyde + H2O = acetaldehyde + phosphate + H(+). Involved in phosphonate degradation. The polypeptide is Phosphonoacetaldehyde hydrolase (Bacillus cereus (strain B4264)).